Here is a 658-residue protein sequence, read N- to C-terminus: Putative phospholipase B-like lamina ancestor (658 aa).

A signal peptide spans 1–29; sequence MLKVVGASWQKTRIGTYILIGAGLLVIGA. N-linked (GlcNAc...) asparagine glycans are attached at residues Asn229, Asn465, and Asn486.

It belongs to the phospholipase B-like family. Expressed in neural and glial progenitors prior to, but not after, differentiation. Not expressed in late third instar disks, but is expressed uniformly by early third instar disks, in the imaginal ring of the proventriculus and in the salivary gland.

It is found in the secreted. Its function is as follows. Putative phospholipase. Involved in the regulation of cellular plasticity in imaginal disks. The chain is Putative phospholipase B-like lamina ancestor (lama) from Drosophila melanogaster (Fruit fly).